Consider the following 225-residue polypeptide: Ribonuclease 3 (225 aa).

Positions 7–129 constitute an RNase III domain; the sequence is MPRLCRTLGY…IIGAVYIDSG (123 aa). E42 is a binding site for Mg(2+). D46 is an active-site residue. 2 residues coordinate Mg(2+): D115 and E118. Residue E118 is part of the active site. The 71-residue stretch at 155–225 folds into the DRBM domain; it reads DPKTLLQELL…AADALELMKR (71 aa).

This sequence belongs to the ribonuclease III family. Homodimer. The cofactor is Mg(2+).

The protein localises to the cytoplasm. It catalyses the reaction Endonucleolytic cleavage to 5'-phosphomonoester.. Its function is as follows. Digests double-stranded RNA. Involved in the processing of primary rRNA transcript to yield the immediate precursors to the large and small rRNAs (23S and 16S). Processes some mRNAs, and tRNAs when they are encoded in the rRNA operon. Processes pre-crRNA and tracrRNA of type II CRISPR loci if present in the organism. The chain is Ribonuclease 3 from Shewanella sediminis (strain HAW-EB3).